The following is a 626-amino-acid chain: Miltiradiene synthase KSL1, chloroplastic (626 aa).

The N-terminal 51 residues, 1-51, are a transit peptide targeting the chloroplast; that stretch reads MSLAFNLRVIPFSGHTIQSRRGLFPVHESPMITTKPFAAVKCSLTTSTDLM. Residues Asp-329, Asp-333, Asn-473, and Glu-481 each contribute to the Mg(2+) site. The DDXXD motif motif lies at 329-333; that stretch reads DDFFD.

It belongs to the terpene synthase family. Requires Mg(2+) as cofactor. In terms of tissue distribution, highly expressed in roots, and, at low levels, in stems and leaves.

It localises to the plastid. Its subcellular location is the chloroplast. It catalyses the reaction (+)-copalyl diphosphate = miltiradiene + diphosphate. The protein operates within secondary metabolite biosynthesis; terpenoid biosynthesis. In terms of biological role, involved in the biosynthesis of ent-kaurene diterpenoids natural products such as oridonin, miltiradiene, eriocalyxin B and nezukol, known to exhibit antitumor, anti-inflammatory and antibacterial activities. Catalyzes the conversion of (+)-copalyl diphosphate ((+)-CPP) to miltiradiene. This is Miltiradiene synthase KSL1, chloroplastic from Isodon rubescens (Rabdosia rubescens).